Reading from the N-terminus, the 88-residue chain is Small ribosomal subunit protein uS17 (88 aa).

It belongs to the universal ribosomal protein uS17 family. As to quaternary structure, part of the 30S ribosomal subunit.

Functionally, one of the primary rRNA binding proteins, it binds specifically to the 5'-end of 16S ribosomal RNA. The sequence is that of Small ribosomal subunit protein uS17 from Marinobacter nauticus (strain ATCC 700491 / DSM 11845 / VT8) (Marinobacter aquaeolei).